Reading from the N-terminus, the 246-residue chain is MRYDGRKNNELRPVTMDLDFITHPEGSVLITVGGTKVICNASVEDRVPPFLRGEGKGWITAEYSMLPRATNQRTIRESSKGKISGRTMEIQRLIGRALRAVVDLEKLGERTIWIDCDVIQADGGTRTASITGAFTAMALAVGRLVEKGALKEMPITDFLAATSVGIDKEKGLILDLNYQEDSAAEVDMNVVMTGEGRFVELQGTGEEATFSRSELDGLLELAEKGIAELLEKQKEVLGDVALSIQQ.

Phosphate-binding positions include Arg-86 and 124–126 (GTR).

Belongs to the RNase PH family. Homohexameric ring arranged as a trimer of dimers.

It catalyses the reaction tRNA(n+1) + phosphate = tRNA(n) + a ribonucleoside 5'-diphosphate. In terms of biological role, phosphorolytic 3'-5' exoribonuclease that plays an important role in tRNA 3'-end maturation. Removes nucleotide residues following the 3'-CCA terminus of tRNAs; can also add nucleotides to the ends of RNA molecules by using nucleoside diphosphates as substrates, but this may not be physiologically important. Probably plays a role in initiation of 16S rRNA degradation (leading to ribosome degradation) during starvation. In Bacillus licheniformis (strain ATCC 14580 / DSM 13 / JCM 2505 / CCUG 7422 / NBRC 12200 / NCIMB 9375 / NCTC 10341 / NRRL NRS-1264 / Gibson 46), this protein is Ribonuclease PH.